The sequence spans 184 residues: MSIKADRWIKRMAQEHGMIEPFVDGQVRGGVVSYGLSSYGYDIRIADEFKIFTNVNSAIIDPKNFDPRSFVDVKADVCIIPPNSFVLCRTIEYFRIPRNVLCVCVGKSTYARCGLIANVTPFEPGWEGYVTIEISNTTPLPAKIYANEGIAQVLFFEGDELPDVAYDDRSGKYQGQTGVTLPRI.

107-112 (KSTYAR) contributes to the dCTP binding site. E133 acts as the Proton donor/acceptor in catalysis. DCTP contacts are provided by Q152, Y166, and Q176.

This sequence belongs to the dCTP deaminase family. In terms of assembly, homotrimer.

It carries out the reaction dCTP + H2O + H(+) = dUTP + NH4(+). Its pathway is pyrimidine metabolism; dUMP biosynthesis; dUMP from dCTP (dUTP route): step 1/2. Its function is as follows. Catalyzes the deamination of dCTP to dUTP. The polypeptide is dCTP deaminase (Herpetosiphon aurantiacus (strain ATCC 23779 / DSM 785 / 114-95)).